The sequence spans 251 residues: Pyrroloquinoline-quinone synthase (251 aa).

This sequence belongs to the PqqC family.

The catalysed reaction is 6-(2-amino-2-carboxyethyl)-7,8-dioxo-1,2,3,4,7,8-hexahydroquinoline-2,4-dicarboxylate + 3 O2 = pyrroloquinoline quinone + 2 H2O2 + 2 H2O + H(+). It functions in the pathway cofactor biosynthesis; pyrroloquinoline quinone biosynthesis. In terms of biological role, ring cyclization and eight-electron oxidation of 3a-(2-amino-2-carboxyethyl)-4,5-dioxo-4,5,6,7,8,9-hexahydroquinoline-7,9-dicarboxylic-acid to PQQ. The polypeptide is Pyrroloquinoline-quinone synthase (Pseudomonas putida (strain GB-1)).